We begin with the raw amino-acid sequence, 373 residues long: Plasmepsin VIII (373 aa).

An N-terminal signal peptide occupies residues 1 to 21 (MNKFFVFPLLLILNSIVLVKS). A Peptidase A1 domain is found at 50-370 (FIGEISIGNP…EKDNMRIGLA (321 aa)). Active-site residues include aspartate 68 and aspartate 258.

Belongs to the peptidase A1 family.

Its function is as follows. During the development in the mosquito vector, plays an essential role in sporozoite egress from the oocyst and sporozoite gliding motility, which is required for the invasion of salivary glands and subsequent transmission to the host. In Plasmodium berghei (strain Anka), this protein is Plasmepsin VIII.